The following is a 370-amino-acid chain: Mitogen-activated protein kinase 3 (370 aa).

Residues 32–319 form the Protein kinase domain; it reads YVPIKPIGRG…VTEALEHPYM (288 aa). Residues 38-46 and Lys61 contribute to the ATP site; that span reads IGRGAYGIV. The active-site Proton acceptor is the Asp158. Thr191 is modified (phosphothreonine). The TXY motif lies at 191–193; the sequence is TEY. Phosphotyrosine is present on Tyr193.

It belongs to the protein kinase superfamily. CMGC Ser/Thr protein kinase family. MAP kinase subfamily. Post-translationally, dually phosphorylated on Thr-191 and Tyr-193, which activates the enzyme.

It carries out the reaction L-seryl-[protein] + ATP = O-phospho-L-seryl-[protein] + ADP + H(+). The catalysed reaction is L-threonyl-[protein] + ATP = O-phospho-L-threonyl-[protein] + ADP + H(+). Activated by threonine and tyrosine phosphorylation. In Oryza sativa subsp. japonica (Rice), this protein is Mitogen-activated protein kinase 3 (MPK3).